The primary structure comprises 444 residues: Proline--tRNA ligase (444 aa).

The protein belongs to the class-II aminoacyl-tRNA synthetase family. ProS type 2 subfamily. In terms of assembly, homodimer.

It localises to the cytoplasm. The enzyme catalyses tRNA(Pro) + L-proline + ATP = L-prolyl-tRNA(Pro) + AMP + diphosphate. Its function is as follows. Catalyzes the attachment of proline to tRNA(Pro) in a two-step reaction: proline is first activated by ATP to form Pro-AMP and then transferred to the acceptor end of tRNA(Pro). This Bradyrhizobium sp. (strain BTAi1 / ATCC BAA-1182) protein is Proline--tRNA ligase.